A 239-amino-acid chain; its full sequence is Ribose-5-phosphate isomerase A (239 aa).

Substrate contacts are provided by residues 34–37 (TGST), 94–97 (DGAD), and 107–110 (KGGG). The active-site Proton acceptor is Glu-116. Lys-134 lines the substrate pocket.

Belongs to the ribose 5-phosphate isomerase family. As to quaternary structure, homodimer.

The enzyme catalyses aldehydo-D-ribose 5-phosphate = D-ribulose 5-phosphate. Its pathway is carbohydrate degradation; pentose phosphate pathway; D-ribose 5-phosphate from D-ribulose 5-phosphate (non-oxidative stage): step 1/1. Functionally, catalyzes the reversible conversion of ribose-5-phosphate to ribulose 5-phosphate. This is Ribose-5-phosphate isomerase A from Treponema denticola (strain ATCC 35405 / DSM 14222 / CIP 103919 / JCM 8153 / KCTC 15104).